The primary structure comprises 238 residues: ATP-dependent Clp protease proteolytic subunit 4 (238 aa).

The Nucleophile role is filled by Ser113. His138 is a catalytic residue.

The protein belongs to the peptidase S14 family. In terms of assembly, fourteen ClpP subunits assemble into 2 heptameric rings which stack back to back to give a disk-like structure with a central cavity, resembling the structure of eukaryotic proteasomes.

Its subcellular location is the cytoplasm. The catalysed reaction is Hydrolysis of proteins to small peptides in the presence of ATP and magnesium. alpha-casein is the usual test substrate. In the absence of ATP, only oligopeptides shorter than five residues are hydrolyzed (such as succinyl-Leu-Tyr-|-NHMec, and Leu-Tyr-Leu-|-Tyr-Trp, in which cleavage of the -Tyr-|-Leu- and -Tyr-|-Trp bonds also occurs).. Its function is as follows. Cleaves peptides in various proteins in a process that requires ATP hydrolysis. Has a chymotrypsin-like activity. Plays a major role in the degradation of misfolded proteins. In Frankia casuarinae (strain DSM 45818 / CECT 9043 / HFP020203 / CcI3), this protein is ATP-dependent Clp protease proteolytic subunit 4.